The primary structure comprises 210 residues: Outer-membrane lipoprotein LolB (210 aa).

An N-terminal signal peptide occupies residues 1 to 18 (MKKFTKILSLSTLLFLAG). C19 carries N-palmitoyl cysteine lipidation. C19 carries the S-diacylglycerol cysteine lipid modification.

It belongs to the LolB family. In terms of assembly, monomer.

It is found in the cell outer membrane. Its function is as follows. Plays a critical role in the incorporation of lipoproteins in the outer membrane after they are released by the LolA protein. This Actinobacillus pleuropneumoniae serotype 7 (strain AP76) protein is Outer-membrane lipoprotein LolB.